Here is a 227-residue protein sequence, read N- to C-terminus: Ribose-5-phosphate isomerase A (227 aa).

Substrate is bound by residues 26–29 (TGST), 82–85 (DGAD), and 95–98 (KGGG). The Proton acceptor role is filled by Glu-104. Position 122 (Lys-122) interacts with substrate.

The protein belongs to the ribose 5-phosphate isomerase family. As to quaternary structure, homodimer.

The enzyme catalyses aldehydo-D-ribose 5-phosphate = D-ribulose 5-phosphate. It participates in carbohydrate degradation; pentose phosphate pathway; D-ribose 5-phosphate from D-ribulose 5-phosphate (non-oxidative stage): step 1/1. In terms of biological role, catalyzes the reversible conversion of ribose-5-phosphate to ribulose 5-phosphate. The polypeptide is Ribose-5-phosphate isomerase A (Streptococcus pyogenes serotype M1).